We begin with the raw amino-acid sequence, 81 residues long: Small ribosomal subunit protein eS21 (81 aa).

It belongs to the eukaryotic ribosomal protein eS21 family. Component of the 40S small ribosomal subunit.

The protein resides in the cytoplasm. It is found in the cytosol. Its subcellular location is the rough endoplasmic reticulum. In terms of biological role, component of the small ribosomal subunit. The ribosome is a large ribonucleoprotein complex responsible for the synthesis of proteins in the cell. The polypeptide is Small ribosomal subunit protein eS21 (rps21) (Danio rerio (Zebrafish)).